The primary structure comprises 268 residues: Undecaprenyl-diphosphatase (268 aa).

The next 8 helical transmembrane spans lie at 8–28, 41–61, 83–103, 108–128, 144–164, 184–204, 218–238, and 246–266; these read VILG…TGHL, AFWD…IVGL, FVIG…VAGK, VLFN…ILLW, FPLL…IPGV, AAEF…AYDF, IVAI…KTFL, and FVVF…ALAL.

The protein belongs to the UppP family.

The protein resides in the cell inner membrane. It carries out the reaction di-trans,octa-cis-undecaprenyl diphosphate + H2O = di-trans,octa-cis-undecaprenyl phosphate + phosphate + H(+). Functionally, catalyzes the dephosphorylation of undecaprenyl diphosphate (UPP). Confers resistance to bacitracin. The sequence is that of Undecaprenyl-diphosphatase from Bradyrhizobium diazoefficiens (strain JCM 10833 / BCRC 13528 / IAM 13628 / NBRC 14792 / USDA 110).